The sequence spans 6713 residues: MGNLQTAINDKSGTLASQNFLDADEQKRNAYNQAISAAETILNKQTGPNTAKTAVEQALNNVNSAKHALNGTQNLNNAKQAAITAINGASDLNQKQKDALKAQANGAQRVSNANDVQRNATELNTAMGQLQHAIADKTNTLASSKYVNADSTKQNAYTTKVTNAEHIISGTPTVVTTPSEVTAAANQVNSAKQELNGDERLRVAKQNANTAIDALTQLNTPQKAKLKEQVGQANRLEDVQSVQTNGQSLNNAMKGLRDSIANETTVKASQNYTDASPNNQSTYNSAVSNAKGIINQTNNPTMDTSAITQATTQVNNAKNGLNGAENLRNAQNTAKQNLNTLSHLTNNQKSAISSQIDRAGHVSEVTAAKNAATELNAQMGNLEQAIHDQNTVKQGVNFTDADKAKRDAYTNAVSRAETILNKTQGANTSKQDVEAAIQNVTSAKNALNGDQNVTNAKNAAKNALNNLTSINNAQKRDLTTKIDQATTVAGVEAVSNTGTQLNTAMANLQNGINDKANTLASENYHDADSDKKTAYTQAVTNAENILNKNSGSNLDKAAVENALSQVTNAKGALNGNHNLEQAKSNANTTINGLQHLTTAQKDKLKQQVQQAQNVAGVDTVKSSANTLNGAMGTLRNSIQDNTATKNGQNYLDATERNKTNYNNAVDSANGVINATSNPNMDANAINQIATQVTSTKNALDGTHNLTQAKQTATNAIDGATNLNKAQKDALKAQVTSAQRVANVTSIQQTANELNTAMGQLQHGIDDENATKQTQKYRDAEQSKKTAYDQAVAAAKAILNKQTGSNSDKAAVDRALQQVTSTKDALNGDAKLAEAKAAARQNLGTLNHITNAQRTALEGQINQATTVDGVNTVKTNANTLDGAMNSLQGAINDKDATLRNQNYLDADESKRNAYTQAVTAAEGILNKQTGGNTSKADVDNALNAVTRAKAALNGAENLRNAKTSATNTINGLPNLTQLQKDNLKHQVEQAQNVVGVNGVKDKGNTLNTAMGALRTSIQNDNTTKTSQNYLDASDSNKNNYNTAVNNANGVINATNNPNMDANAINDMANQVNTTKAALNGAQNLAQAKTNATNTINNAQDLNQKQKDALKTQVNNAQRVSDANNVQHTATELNGAMTALKAAIADKERTKASGNYVNADQEKRQAYDSKVTNAENIINGTPNATLTVNDVNSAASQVNAAKTALNGDNNLRVAKEHANNTIDGLAQLNNVQKAKLKEQVQSATTLDGVQTVKNSSQTLNTAMKGLRDSIANEATIKAGQNYTDASPNNRNEYDSAVTAAKAIINQTSNPTMEPNTITQATSQVTTKEHALNGAQNLAQAKTTAKNNLNNLTSINNAQKDALTRNIDGATTVAGVNQETAKATELNNAMHSLQNGINDETQTKQTQKYLDAEPSKKSAYDQAVNAAKAILTKASGQNVDKAAVEQALQNVNSTKTALNGDAKLNEAKAAAKQTLGTLTHINNAQRNALDNEITQATNVEGVNTVKAKAQQLDGAMGQLETSIRDKDTTLQSQNYQDADDAKRTAYSQAVNAAATILNKTAGGNTPKADVERAMQAVTQANTALNGIQNLERAKQAANTAITNASDLNTKQKEALKAQVTSAGRVSAANGVEHTATELNTAMTALKRAIADKADTKASGNYVNADANKRQAYDEKVTAAEHIVSGTPTPTLTPSDVTNAATQVTNAKTQLNGNHNLEVAKQNANTAIDGLTSLNGPQKAKLKEQVGQATTLPNVQTVRDNAQTLNTAMKGLRDSIANEATIKAGQNYTDASQNKQNDYNNAVTAAKAIIGQTTSPSMIAQEINQAKDQVTAKQQALNGQENLRTAQTNAKQHLNGLSDLTNAQKDAAKRQIEGATHVNEVTQAQNNADALNTAMTNLKNGIQDQNTIKQGVNFTDADEAKRNAYTNAVTQAEQILNKAQGPNTAKDGVETALQNVQRAKNELNGNQNVANAKTTAKNALNNLTSINNAQKAALKSQIEGATTVAGVNQVSTMASELNTAMSNLQRGINDEAATKAAQKYTEADRDKQTAYNDAVTAAKTLLDKTAGSNDNKVAVEQALQRVNTAKTALNGDARLNEAKNTAKQQLATMSHLTNAQKANLTEQIERGTTVAGVQGIQANAGTLNQAMNQLRQSIASKDATKSSEDYQDANADLQNAYNDAVTNAEGIISATNNPEMNPDTINQKASQVNSAKSALNGDEKLAAVKQTAKSDIGRLTDLNNAQRTAANAEVDQAPNLAAVTAAKNKATSLNTAMGNLKHALAEKDNTKRSVNYTDADQPKQQAYDTAVTQAEAITNANGSNANETQVQAALNQLNQAKNDLNGDNKVAQAKETAKRALASYSNLNNAQSTAATSQIDNATTVADVTAAQNTANELNTAMGQLQNGINDQNTVKQQVNFTDADQGKKDAYTNAVTNAQGILDKANGQNMTKAQVEAALNQVTTAKNALNGDANVRQAKSDAKANLGTLTHLNNAQKQDLTSQIEGATTVNGVNSVKTKAQDLDGAMQRLESAIANKDQTKASENYIDADPTKKTAFDNAITQAESYLNKDHGTNKDKQAVEQAIQSVTSTENALNGDANLQCAKTEATQAIDNLTQLNTPQKTALKQQVNAAQRVSGVTDLKNSATSLNNAMDQLKQAIGDHDTIVAGGNYTNASPDKQGAYTDAYNAAKNIVNGSPNVITNAADVTAATQRVNNAETSLNGDTNLATAKQQAKDALRQMTHLSDAQKQSITGQIDSATQVTGVQSVKDNATNLDNAMNQLRNSIANKDEVKASQPYVDADTDKQNAYNTAVTSAENIINATSQPTLDPSAVTQAANQVNTNKTALNGAQNLANKKQETTANINRLSHLNNAQKQDLNTQVTNAPNISTVNQVKTKAEQLDQAMERLINGIQDKDQVKQSVNFTDADPEKQTAYNNAVTAAENIINQANGTNANQSQVEAALSTVTTTKQALNGDRKVTDAKNNANQTLSTLDNLNNAQKGAVTGNINQAHTVAEVTQAIQTAQELNTAMGNLKNSLNDKDTTLGSQNFADADPEKKNAYNEAVRNAENILNKSTGTNVPKDQVEAAMNQVNTTKAALNGTQNLEKAKQHANTAIDGLSHLTNAQKEALKQLVQQSTTVAEAQGNEQKANNVDAAMDKLRQSIADNATTKQNQNYTDASPNKKDAYNNAVTTAQGIIDQTTNPSLDPTVINQAAGQVSTSKNALNGNENLEAAKQQATQSLGSLDNLNNAQKQAVTNQINGAHTVDEANQIKQNAQNLNTAMGNLKQAIADKDATKATVNFTDADQAKQQAYNTAVTNAENIISKANGGNATQTEVEQAIQQVNAAKQALNGNANVQHAKDEATALINNSNDLNQAQKDALKQQVQNATTVAGVNNVKQTAQELNNAMTQLKQGIADKEQTKADGNFVNADSDKQNAYNQAVAKAEALISGTPDVVVTPSEITAALNKVTQAKNDLNGNTNLATAKQNVQHAIDQLPNLNQAQRDEYSKQITQATLVPNVNAIQQAATTLNDAMTQLKQGIANKAQIKGSENYHDADTDKQTAYDNAVTKAEELLKQTTNPTMDPNTIQQALTKVNDTNQALNGNQKLADAKQDAKTTLGTLDHLNDAQKQALTTQVEQAPDIATVNNVKQNAQNLNNAMTNLNNALQDKTETLNSINFTDADQAKKDDYTNAVSHAEGILSKANGSNASQTEVEQAMQRVNEAKQALNGNDNVQRAKDAAKQVITNANDLNQAQKDALKQQVDAAQTVANVNTIKQTAQDLNQAMTQLKQGIADKDQTKANGNFVNADTDKQNAYNNAVAHAEQIISGTPNANVDPQQVAQALQQVNQAKGDLNGNHNLQVAKDNANTAIDQLPNLNQPQKTALKDQVSHAELVTGVNAIKQNADALNNAMGTLKQQIQANSQVPQSVDFTQADQDKQQAYNNAANQAQQIANGTPTPVLAPDTVTKAVTTMNQAKDALNGDEKLAQAKQDALANLDTLRDLNQPQRDALRNQINQAQALATVEQTKQNAQNVNTAMGNLKQGIANKDTVKASENYHDADVDKQTAYTNAVSQAEGIINQTTNPTLNPDDITRALTQVTDAKNSLNGEAKLATEKQNAKDAVSGMTHLNDAQKQALKGQIDQSPEIATVNQVKQTATSLDQAMDQLSQAINDKDQILADGNYLNADPDKQNAYKQAVAKAEALLNKQSGTNEVQAQVESITNEVNAAKQALNGNDNLANAKQQAKQQLANLTHLNDAQKQSFESQITQAPLVTDVTTINQKAQTLDHAMELLRNSVADNQTTLASEDYHDATAQRQNDYNKAVTAANNIINQTTSPTMNPDDVNGATTQVNNTKVALDGDENLAAAKQQANNRLDQLDHLNNAQKQQLQSQITQSSDIAAVNGHKQTAESLNTAMGNLINAIADHQAVEQRGNFINADTDKQTAYNTAVNEAAAMINKQTGQNANQTEVEQAITKVQTTLQALNGDHNLQVAKTNATQAIDVLTSLNDPQKTALKDQVTAATLVTAVHQIEQNANTLNQAMHGLRQSIQDNAATKANSKYINEDQPEQQNYDQAVQAANNIINEQTATLDNNAINQVAATVNTTKAALHGDVKLQNDKDHAKQTVSQLAHLNNAQKHMEDTLIDSETTRTAVKQDLTEVQALDQLMDALQQSIADKDATRASSAYVNAEPNKKQAYDEAVQNAESIIAGLNNPTINKGNVSSATQAVISSKNALDGVERLAQDKQTAGNSLNHLDQLTPAQQQALENQINNATTCDKVAEIIAQAQALNEAMKALKESIKDQPQTEASSKFINEDQAQKDAYTQAVQHAKDLINKTTDPTLAKSIIDQATQAVTDAKNNLHGDQKLAQDKQRATETLNNLSNLNTPQRQALENQINNAATRGEVAQKLTEAQALNQAMEALRNSIQDQQQTESGSKFINEDKPQKDAYQAAVQNAKDLINQTGNPTLDKAQVEQLTHAFKQAKDNLHGDQKLADDKQHAVTDLNQLNGLNNPQRQALESQINNAATRGEVAQKLAEAKALDQAMQALRNSIQDQQQTEAGSKFINEDKPQKDAYQAAVQNAKDLINQTGNPTLDKSQVEQLTQAVTTAKDNLHGDQKLARDQQQAVTTVNALPNLNHAQQQTLTDAINAAPTRTEVAQHVQTATELDHAMETLKNKVDQVNTDKAQPNYTEASTDKKEAVDQALQAAQSITDPTNGSNANKDAVEQALTKLQEKVNELNGNERVAEAKTQAKQTIDQLTHLNADQIATAKQNIDQATKLQPIAELVDQATQLNQSMDQLQQAVNEHANVEQTIDYTQADSDKQKAYKQAIADAENVLKQNANKQQVDQALQNILNAKQALNGDERVALAKTNGKHDIDQLNALNNAQQDGFKGRIDQSNDLNQIQQIVDEAKALNRAMDQLSQEITGNEGRTKGSTNYVNADTQVKQVYDEAVDKAKQALDKSSGQNLTAEQVIKLNDAVTAAKKALNGEERLNNRKAEALQRLDQLTHLNNAQRQLAIQQINNAETLNKASRAINRATKLDNAMGAVQQYIDEQHLGVISSTNYINADDNLKANYDNAIANAAHELDKVQGNAIAKAEAEQLKQNIIDAQNALNGDQNLANAKDKANAFVNSLNGLNQQQQDLAHKAINNADTVSDVTDIVNNQIDLNDAMETLKHLVDNEIPNAEQTVNYQNADDNAKTNFDDAKRLANTLLNSDNTNVNDINGAIQAVNDAIHNLNGDQRLQDAKDKAIQSINQALANKLKEIEASNATDQDKLIAKNKAEELANSIINNINKATSNQAVSQVQTAGNHAIEQVHANEIPKAKIDANKDVDKQVQALIDEIDRNPNLTDKEKQALKDRINQILQQGHNDINNALTKEEIEQAKAQLAQALQDIKDLVKAKEDAKQDVDKQVQALIDEIDQNPNLTDKEKQALKDRINQILQQGHNGINNAMTKEEIEQAKAQLAQALKEIKDLVKAKENAKQDVDKQVQALIDEIDQNPNLTDKEKQALKDRINQILQQGHNDINNAMTKEEIEQAKAQLAQALQDIKDLVKAKEDAKNAIKALANAKRDQINSNPDLTPEQKAKALKEIDEAEKRALQNVENAQTIDQLNRGLNLGLDDIRNTHVWEVDEQPAVNEIFEATPEQILVNGELIVHRDDIITEQDILAHINLIDQLSAEVIDTPSTATISDSLTAKVEVTLLDGSKVIVNVPVKVVEKELSVVKQQAIESIENAAQQKIDEINNSVTLTLEQKEAAIAEVNKLKQQAIDHVNNAPDVHSVEEIQQQEQAYIEQFNPEQFTIEQAKSNAIKSIEDAIQHMIDEIKARTDLTDKEKQEAIAKLNQLKEQAIQAIQRAQSISEITEQLEQFKAQMKAANPTAKELAKRKQEAISRIKDFSNEKINSIRNSEIGTADEKQAAMNQINEIVLETIRDINNAHTLQQVEAALNNGIARISAVQIVISDRAKQSSSTGNESNSHLTIGYGTANHPFNSSTIGHKKKLDEDDDIDPLHMRHFSNNFGNVIKNAIGVVGISGLLASFWFFIAKRRRKEDEEEELEIRDNNKDSIKETLDDTKHLPLLFAKRRRKEDEEDVTVEEKDSLNNGESLDKVKHTPFFLPKRRRKEDEEDVEVTNENTDEKVLKDNEHSPLLFAKRRKDKEEDVETTTSIESKDEDVPLLLAKKKNQKDNQSKDKKSASKNTSKKVAAKKKKKKSKKNKK.

FIVAR domains lie at 1 to 58 (MGNL…VEQA), 126 to 184 (AMGQ…VTAA), 252 to 310 (AMKG…ITQA), 378 to 436 (QMGN…VEAA), 504 to 562 (AMAN…VENA), 630 to 688 (AMGT…INQI), 756 to 814 (AMGQ…VDRA), 882 to 940 (AMNS…VDNA), 1008 to 1066 (AMGA…INDM), 1134 to 1192 (AMTA…VNSA), 1260 to 1318 (AMKG…ITQA), 1386 to 1444 (AMHS…VEQA), 1512 to 1570 (AMGQ…VERA), 1638 to 1696 (AMTA…VTNA), 1764 to 1822 (AMKG…INQA), 1890 to 1948 (AMTN…VETA), 2142 to 2200 (AMNQ…INQK), 2268 to 2325 (AMGN…VQAA), 2393 to 2451 (AMGQ…VEAA), 2519 to 2577 (AMQR…VEQA), 2645 to 2703 (AMDQ…VTAA), 2771 to 2829 (AMNQ…VTQA), 2897 to 2955 (AMER…VEAA), 3023 to 3081 (AMGN…VEAA), 3149 to 3207 (AMDK…INQA), 3275 to 3333 (AMGN…VEQA), 3401 to 3459 (AMTQ…ITAA), 3527 to 3585 (AMTQ…IQQA), 3653 to 3711 (AMTN…VEQA), 3779 to 3837 (AMTQ…VAQA), 3905 to 3963 (AMGT…VTKA), 4031 to 4089 (AMGN…ITRA), 4157 to 4218 (AMDQ…ITNE), 4283 to 4341 (AMEL…VNGA), 4409 to 4467 (AMGN…VEQA), 4535 to 4592 (AMHG…INQV), 4660 to 4718 (LMDA…VSSA), 4786 to 4844 (AMKA…IDQA), 4912 to 4970 (AMEA…VEQL), 5038 to 5096 (AMQA…VEQL), 5164 to 5222 (AMET…VEQA), 5290 to 5344 (SMDQ…VDQA), 5412 to 5471 (AMDQ…VIKL), and 5666 to 5722 (AMET…INGA). A helical membrane pass occupies residues 6518 to 6540 (VIKNAIGVVGISGLLASFWFFIA). The disordered stretch occupies residues 6616–6713 (RRKEDEEDVE…KKKKSKKNKK (98 aa)). 2 stretches are compositionally biased toward basic and acidic residues: residues 6631 to 6641 (TDEKVLKDNEH) and 6680 to 6690 (QKDNQSKDKKS). A compositionally biased stretch (basic residues) spans 6695–6713 (TSKKVAAKKKKKKSKKNKK).

The protein localises to the cell membrane. The sequence is that of Extracellular matrix-binding protein EbhA (ebhA) from Staphylococcus aureus (strain Mu3 / ATCC 700698).